Consider the following 103-residue polypeptide: uncharacterized protein (103 aa).

The CHCH domain maps to 10–63 (FPECDHLKQIYDKCFTEFFQKFITPNYRHQYAVNPCERLHDVYKRCVEERLATQ). 2 consecutive short sequence motifs (cx9C motif) follow at residues 13-23 (CDHLKQIYDKC) and 45-55 (CERLHDVYKRC). Cystine bridges form between Cys13–Cys55 and Cys23–Cys45. The segment covering 80 to 90 (TDDDKLKDRQN) has biased composition (basic and acidic residues). The disordered stretch occupies residues 80 to 103 (TDDDKLKDRQNNQKTNSENKCSSS). Polar residues predominate over residues 91-103 (NQKTNSENKCSSS).

It belongs to the TRIAP1/MDM35 family.

This is an uncharacterized protein from Caenorhabditis elegans.